The primary structure comprises 214 residues: Probable transaldolase (214 aa).

Lysine 83 functions as the Schiff-base intermediate with substrate in the catalytic mechanism.

Belongs to the transaldolase family. Type 3B subfamily.

The protein localises to the cytoplasm. The enzyme catalyses D-sedoheptulose 7-phosphate + D-glyceraldehyde 3-phosphate = D-erythrose 4-phosphate + beta-D-fructose 6-phosphate. Its pathway is carbohydrate degradation; pentose phosphate pathway; D-glyceraldehyde 3-phosphate and beta-D-fructose 6-phosphate from D-ribose 5-phosphate and D-xylulose 5-phosphate (non-oxidative stage): step 2/3. In terms of biological role, transaldolase is important for the balance of metabolites in the pentose-phosphate pathway. This is Probable transaldolase from Geotalea daltonii (strain DSM 22248 / JCM 15807 / FRC-32) (Geobacter daltonii).